Reading from the N-terminus, the 335-residue chain is Stearoyl-CoA desaturase 5 (335 aa).

The Cytoplasmic portion of the chain corresponds to 1-54 (MPGPAVDAEKVPFRSAKEEIRAGVGVEGSEGGGGGGGRERPGARGHRQDIVWRN). Residues 24-44 (VGVEGSEGGGGGGGRERPGAR) are disordered. Residues 25–36 (GVEGSEGGGGGG) show a composition bias toward gly residues. Residue N54 coordinates substrate. A helical membrane pass occupies residues 55-75 (VFLMSLLHLAAVYSLVLIPKA). The Lumenal segment spans residues 76-77 (QP). A helical membrane pass occupies residues 78 to 98 (LTLLWAYFCFLLTALGVTAGA). 2 residues coordinate Fe cation: H99 and H104. The Histidine box-1 signature appears at 99 to 104 (HRLWSH). At 99–198 (HRLWSHRSYK…VVRFQRKYYK (100 aa)) the chain is on the cytoplasmic side. Residues N127, R134, and D135 each coordinate substrate. Fe cation contacts are provided by H136, H139, and H140. The Histidine box-2 signature appears at 136–140 (HRVHH). R167 and K168 together coordinate substrate. A helical transmembrane segment spans residues 199–219 (ITVVLMCFVVPTLVPWYIWGE). At 220–227 (SLWNSYFL) the chain is on the lumenal side. Residues 228 to 247 (ASILRYTISLNVTWLVNSVA) traverse the membrane as a helical segment. W241 lines the substrate pocket. Fe cation is bound by residues H248, H277, H280, and H281. Topologically, residues 248 to 335 (HMYGNRPYDK…RKARTGDGSA (88 aa)) are cytoplasmic. The Histidine box-3 motif lies at 277-281 (HNYHH).

This sequence belongs to the fatty acid desaturase type 1 family. In terms of assembly, may self-associate and form homodimers. It depends on Fe(2+) as a cofactor. Detected in brain.

The protein localises to the endoplasmic reticulum membrane. The catalysed reaction is octadecanoyl-CoA + 2 Fe(II)-[cytochrome b5] + O2 + 2 H(+) = (9Z)-octadecenoyl-CoA + 2 Fe(III)-[cytochrome b5] + 2 H2O. It carries out the reaction hexadecanoyl-CoA + 2 Fe(II)-[cytochrome b5] + O2 + 2 H(+) = (9Z)-hexadecenoyl-CoA + 2 Fe(III)-[cytochrome b5] + 2 H2O. In terms of biological role, stearoyl-CoA desaturase that utilizes O(2) and electrons from reduced cytochrome b5 to introduce the first double bond into saturated fatty acyl-CoA substrates. Catalyzes the insertion of a cis double bond at the delta-9 position into fatty acyl-CoA substrates including palmitoyl-CoA and stearoyl-CoA. Gives rise to a mixture of 16:1 and 18:1 unsaturated fatty acids. Involved in neuronal cell proliferation and differentiation through down-regulation of EGFR/AKT/MAPK and Wnt signaling pathways. The sequence is that of Stearoyl-CoA desaturase 5 (SCD5) from Bos taurus (Bovine).